The sequence spans 273 residues: Large ribosomal subunit protein uL2cz/uL2cy (273 aa).

Disordered regions lie at residues 1-23 (MAIH…SQVK) and 224-273 (NPVD…RRRK). The segment covering 262–273 (KYSDRFILRRRK) has biased composition (basic and acidic residues).

Belongs to the universal ribosomal protein uL2 family. As to quaternary structure, part of the 50S ribosomal subunit.

The protein resides in the plastid. Its subcellular location is the chloroplast. This is Large ribosomal subunit protein uL2cz/uL2cy (rpl2-A) from Acorus calamus var. americanus (American sweet flag).